The following is a 242-amino-acid chain: NAD-dependent protein deacylase 1 (242 aa).

One can recognise a Deacetylase sirtuin-type domain in the interval 1–242; sequence MDFKILKEKL…FAMKFEEKEG (242 aa). 21–40 is an NAD(+) binding site; sequence GAGISKESGIPTFRGEDGLW. 2 residues coordinate substrate: tyrosine 65 and arginine 68. 99–102 contacts NAD(+); the sequence is QNVD. Histidine 117 (proton acceptor) is an active-site residue. 4 residues coordinate Zn(2+): cysteine 125, cysteine 128, cysteine 146, and cysteine 149. Residues 186–188 and glutamate 241 each bind NAD(+); that span reads GTS.

The protein belongs to the sirtuin family. Class III subfamily. Requires Zn(2+) as cofactor.

The protein resides in the cytoplasm. It catalyses the reaction N(6)-acetyl-L-lysyl-[protein] + NAD(+) + H2O = 2''-O-acetyl-ADP-D-ribose + nicotinamide + L-lysyl-[protein]. It carries out the reaction N(6)-succinyl-L-lysyl-[protein] + NAD(+) + H2O = 2''-O-succinyl-ADP-D-ribose + nicotinamide + L-lysyl-[protein]. Its function is as follows. NAD-dependent lysine deacetylase and desuccinylase that specifically removes acetyl and succinyl groups on target proteins. Modulates the activities of several proteins which are inactive in their acylated form. In Caldanaerobacter subterraneus subsp. tengcongensis (strain DSM 15242 / JCM 11007 / NBRC 100824 / MB4) (Thermoanaerobacter tengcongensis), this protein is NAD-dependent protein deacylase 1.